The primary structure comprises 371 residues: Dead end protein homolog 1 (371 aa).

RRM domains lie at 85-163 and 165-245; these read PQDI…ALDG and PGNF…KLRS.

Its subcellular location is the nucleus. It is found in the cytoplasm. Functionally, RNA-binding factor that positively regulates gene expression by prohibiting miRNA-mediated gene suppression. Relieves miRNA repression in germline cells. Prohibits the function of several miRNAs by blocking the accessibility of target mRNAs. Sequence-specific RNA-binding factor that binds to U-rich regions (URRs) in the 3'untranslated region (3'-UTR) of several mRNAs. Does not bind to miRNAs. May play a role during early embryonic survival. This chain is Dead end protein homolog 1 (dnd1), found in Xenopus laevis (African clawed frog).